The following is a 529-amino-acid chain: Peptide chain release factor 3 (529 aa).

Residues 11–280 form the tr-type G domain; sequence ARRRTFAIIS…GLVEWAPSPM (270 aa). GTP-binding positions include 20–27, 88–92, and 142–145; these read SHPDAGKT, DTPGH, and NKLD.

It belongs to the TRAFAC class translation factor GTPase superfamily. Classic translation factor GTPase family. PrfC subfamily.

It localises to the cytoplasm. Increases the formation of ribosomal termination complexes and stimulates activities of RF-1 and RF-2. It binds guanine nucleotides and has strong preference for UGA stop codons. It may interact directly with the ribosome. The stimulation of RF-1 and RF-2 is significantly reduced by GTP and GDP, but not by GMP. This chain is Peptide chain release factor 3, found in Erwinia tasmaniensis (strain DSM 17950 / CFBP 7177 / CIP 109463 / NCPPB 4357 / Et1/99).